A 339-amino-acid chain; its full sequence is Methionyl-tRNA formyltransferase (339 aa).

110–113 serves as a coordination point for (6S)-5,6,7,8-tetrahydrofolate; the sequence is SLLP.

This sequence belongs to the Fmt family.

It carries out the reaction L-methionyl-tRNA(fMet) + (6R)-10-formyltetrahydrofolate = N-formyl-L-methionyl-tRNA(fMet) + (6S)-5,6,7,8-tetrahydrofolate + H(+). Functionally, attaches a formyl group to the free amino group of methionyl-tRNA(fMet). The formyl group appears to play a dual role in the initiator identity of N-formylmethionyl-tRNA by promoting its recognition by IF2 and preventing the misappropriation of this tRNA by the elongation apparatus. In Prochlorococcus marinus (strain SARG / CCMP1375 / SS120), this protein is Methionyl-tRNA formyltransferase.